The primary structure comprises 404 residues: Cysteine desulfurase IscS (404 aa).

Residues Ala-75–Thr-76, Asn-155, Gln-183, and Ser-203–His-205 each bind pyridoxal 5'-phosphate. Lys-206 carries the post-translational modification N6-(pyridoxal phosphate)lysine. Position 243 (Thr-243) interacts with pyridoxal 5'-phosphate. Catalysis depends on Cys-328, which acts as the Cysteine persulfide intermediate. Cys-328 lines the [2Fe-2S] cluster pocket.

This sequence belongs to the class-V pyridoxal-phosphate-dependent aminotransferase family. NifS/IscS subfamily. In terms of assembly, homodimer. Forms a heterotetramer with IscU, interacts with other sulfur acceptors. The cofactor is pyridoxal 5'-phosphate.

The protein resides in the cytoplasm. It catalyses the reaction (sulfur carrier)-H + L-cysteine = (sulfur carrier)-SH + L-alanine. Its pathway is cofactor biosynthesis; iron-sulfur cluster biosynthesis. Master enzyme that delivers sulfur to a number of partners involved in Fe-S cluster assembly, tRNA modification or cofactor biosynthesis. Catalyzes the removal of elemental sulfur atoms from cysteine to produce alanine. Functions as a sulfur delivery protein for Fe-S cluster synthesis onto IscU, an Fe-S scaffold assembly protein, as well as other S acceptor proteins. This Pseudomonas aeruginosa (strain UCBPP-PA14) protein is Cysteine desulfurase IscS.